Reading from the N-terminus, the 604-residue chain is ATPase family AAA domain-containing protein 3A homolog (604 aa).

The tract at residues 1–50 (MSWLLGRNRQQPQPDQTAGFSEGGGAADPEGRTAGEKSGDSQLSRAERKA) is disordered. Residues 8 to 19 (NRQQPQPDQTAG) show a composition bias toward polar residues. Residues 29–50 (PEGRTAGEKSGDSQLSRAERKA) are compositionally biased toward basic and acidic residues. Positions 62 to 221 (ERAADAAKTL…INLEKIRLKA (160 aa)) form a coiled coil. Position 358–365 (358–365 (GPPGTGKT)) interacts with ATP.

Can form homooligomers.

It localises to the mitochondrion inner membrane. The protein localises to the mitochondrion matrix. Its subcellular location is the mitochondrion nucleoid. In terms of biological role, required to maintain the proper number of mitochondria in neurons and muscles. The sequence is that of ATPase family AAA domain-containing protein 3A homolog from Drosophila melanogaster (Fruit fly).